A 499-amino-acid chain; its full sequence is Cysteine--tRNA ligase (499 aa).

C29 is a binding site for Zn(2+). Residues 31 to 41 (VTVYDLCHLGH) carry the 'HIGH' region motif. Residues C213, H238, and E242 each coordinate Zn(2+). The short motif at 270–274 (KMSKS) is the 'KMSKS' region element. Position 273 (K273) interacts with ATP.

The protein belongs to the class-I aminoacyl-tRNA synthetase family. Monomer. The cofactor is Zn(2+).

Its subcellular location is the cytoplasm. It carries out the reaction tRNA(Cys) + L-cysteine + ATP = L-cysteinyl-tRNA(Cys) + AMP + diphosphate. The sequence is that of Cysteine--tRNA ligase from Prochlorococcus marinus (strain MIT 9303).